The primary structure comprises 297 residues: Virulence genes transcriptional activator SpvR (297 aa).

Positions 1–61 (MDFLINKKLK…IRKNGTLIPT (61 aa)) constitute an HTH lysR-type domain. Residues 21–40 (FSIATSVLYITRTPLSRVIS) constitute a DNA-binding region (H-T-H motif).

This sequence belongs to the LysR transcriptional regulatory family.

The protein resides in the cytoplasm. Functionally, positive regulator for the plasmid-encoded virulence factors SpvA, SpvB, and SpvC. This is Virulence genes transcriptional activator SpvR (spvR) from Salmonella dublin.